Reading from the N-terminus, the 336-residue chain is MSAQVIAIDAMGGDFGPRSIVQASIACLSATPSLHLTLVGQPSLLEDLISGLPAADRARLQVVAASEVVGMDERPSQALRGKPDSSMRIALELVRDGKAQACVSAGNTGALMALSRFVLKTLPGIDRPAMVAAIPTQTGYCQLLDLGANVDCSAENLYQFAVMGSVAAQALGVHRPRVALLNIGTEDIKGNQQVKLAATLLQSARGLNYVGFVEGDGLYRGEADVVVCDGFVGNILLKSSEGLATMIGARIEKLFKGGAFARVAGAVAMPLLKRLQADLAPARHNGASFLGLQGIVIKSHGSAGVQGFQSAIQRALIEIQENLPQRLHGRLEDLLP.

This sequence belongs to the PlsX family. Homodimer. Probably interacts with PlsY.

It localises to the cytoplasm. The enzyme catalyses a fatty acyl-[ACP] + phosphate = an acyl phosphate + holo-[ACP]. It participates in lipid metabolism; phospholipid metabolism. In terms of biological role, catalyzes the reversible formation of acyl-phosphate (acyl-PO(4)) from acyl-[acyl-carrier-protein] (acyl-ACP). This enzyme utilizes acyl-ACP as fatty acyl donor, but not acyl-CoA. The sequence is that of Phosphate acyltransferase from Pseudomonas putida (strain ATCC 47054 / DSM 6125 / CFBP 8728 / NCIMB 11950 / KT2440).